We begin with the raw amino-acid sequence, 951 residues long: AP-1 complex subunit beta-1 (951 aa).

K318 is subject to N6-acetyllysine. Residue Y574 is modified to 3'-nitrotyrosine.

Belongs to the adaptor complexes large subunit family. Adaptor protein complex 1 (AP-1) is a heterotetramer composed of two large adaptins (gamma-type subunit AP1G1 and beta-type subunit AP1B1), a medium adaptin (mu-type subunit AP1M1 or AP1M2) and a small adaptin (sigma-type subunit AP1S1 or AP1S2 or AP1S3).

The protein resides in the cytoplasmic vesicle. Its subcellular location is the clathrin-coated vesicle membrane. The protein localises to the golgi apparatus. Its function is as follows. Subunit of clathrin-associated adaptor protein complex 1 that plays a role in protein sorting in the late-Golgi/trans-Golgi network (TGN) and/or endosomes. The AP complexes mediate both the recruitment of clathrin to membranes and the recognition of sorting signals within the cytosolic tails of transmembrane cargo molecules. This chain is AP-1 complex subunit beta-1 (AP2B1), found in Bos taurus (Bovine).